The chain runs to 179 residues: Shikimate kinase (179 aa).

Residue 11 to 16 (GAGKTT) coordinates ATP. Residue Thr-15 participates in Mg(2+) binding. Asp-33, Arg-57, and Gly-79 together coordinate substrate. Position 118 (Arg-118) interacts with ATP. Arg-140 provides a ligand contact to substrate.

It belongs to the shikimate kinase family. Monomer. The cofactor is Mg(2+).

It is found in the cytoplasm. It carries out the reaction shikimate + ATP = 3-phosphoshikimate + ADP + H(+). It participates in metabolic intermediate biosynthesis; chorismate biosynthesis; chorismate from D-erythrose 4-phosphate and phosphoenolpyruvate: step 5/7. In terms of biological role, catalyzes the specific phosphorylation of the 3-hydroxyl group of shikimic acid using ATP as a cosubstrate. The protein is Shikimate kinase of Bacteroides fragilis (strain ATCC 25285 / DSM 2151 / CCUG 4856 / JCM 11019 / LMG 10263 / NCTC 9343 / Onslow / VPI 2553 / EN-2).